A 334-amino-acid polypeptide reads, in one-letter code: MSIEQLAETAQAMVAPGKGIIAIDESTSTIAKRFSGVGIENTEENRRAYRELLLTTPKLSDYISGAILFDETIRQKTKDGVPFAKYMADHGIIPGIKVDKGAQPLAGMPGELVTEGLDGLRARLEEYYTLGARFAKWRAVINIGEDIPSGTCIEANAHALARYAALCQEQGLVPMVEPEVIMDGDHDIETCYEVTEATLRSLFGALYEQNVVLEGTILKASMVISGKGCEEQASVEEVAESTVMCLKSTVPAILPGIVFLSGGQTDEQSTAHLNEMHQLGNLPWPLSFSYGRAMQQAALKLWSKDMTGNYAKAQQIIYERAKENGLAALGKWKG.

It belongs to the class I fructose-bisphosphate aldolase family.

The enzyme catalyses beta-D-fructose 1,6-bisphosphate = D-glyceraldehyde 3-phosphate + dihydroxyacetone phosphate. It participates in carbohydrate degradation; glycolysis; D-glyceraldehyde 3-phosphate and glycerone phosphate from D-glucose: step 4/4. The polypeptide is Probable fructose-bisphosphate aldolase class 1 (Xanthomonas campestris pv. campestris (strain ATCC 33913 / DSM 3586 / NCPPB 528 / LMG 568 / P 25)).